Consider the following 332-residue polypeptide: Phosphate acyltransferase (332 aa).

The protein belongs to the PlsX family. In terms of assembly, homodimer. Probably interacts with PlsY.

It localises to the cytoplasm. The enzyme catalyses a fatty acyl-[ACP] + phosphate = an acyl phosphate + holo-[ACP]. The protein operates within lipid metabolism; phospholipid metabolism. In terms of biological role, catalyzes the reversible formation of acyl-phosphate (acyl-PO(4)) from acyl-[acyl-carrier-protein] (acyl-ACP). This enzyme utilizes acyl-ACP as fatty acyl donor, but not acyl-CoA. The protein is Phosphate acyltransferase of Nitratiruptor sp. (strain SB155-2).